The sequence spans 248 residues: Small ribosomal subunit protein uS3 (248 aa).

Residues 39 to 113 enclose the KH type-2 domain; that stretch reads IRAYLTKQLS…TIRINVVEVT (75 aa). The disordered stretch occupies residues 218–248; that stretch reads ERPEQKVPLQQPKRRQQRRRPTFEDRSAVEA. Residues 238-248 show a composition bias toward basic and acidic residues; that stretch reads PTFEDRSAVEA.

It belongs to the universal ribosomal protein uS3 family. As to quaternary structure, part of the 30S ribosomal subunit. Forms a tight complex with proteins S10 and S14.

Its function is as follows. Binds the lower part of the 30S subunit head. Binds mRNA in the 70S ribosome, positioning it for translation. This is Small ribosomal subunit protein uS3 from Synechococcus sp. (strain JA-3-3Ab) (Cyanobacteria bacterium Yellowstone A-Prime).